Here is a 435-residue protein sequence, read N- to C-terminus: tRNA-2-methylthio-N(6)-dimethylallyladenosine synthase (435 aa).

The 117-residue stretch at 1 to 117 folds into the MTTase N-terminal domain; that stretch reads MKYFIKTYGC…MPKLLEDVKV (117 aa). Cys10, Cys46, Cys80, Cys156, Cys160, and Cys163 together coordinate [4Fe-4S] cluster. A Radical SAM core domain is found at 142-370; it reads RDNSYCAYVT…LEIQKAITSK (229 aa). The TRAM domain maps to 373-433; sequence QRYKNTVQKV…FQSLDGVVQN (61 aa).

This sequence belongs to the methylthiotransferase family. MiaB subfamily. Monomer. It depends on [4Fe-4S] cluster as a cofactor.

The protein resides in the cytoplasm. It carries out the reaction N(6)-dimethylallyladenosine(37) in tRNA + (sulfur carrier)-SH + AH2 + 2 S-adenosyl-L-methionine = 2-methylsulfanyl-N(6)-dimethylallyladenosine(37) in tRNA + (sulfur carrier)-H + 5'-deoxyadenosine + L-methionine + A + S-adenosyl-L-homocysteine + 2 H(+). Functionally, catalyzes the methylthiolation of N6-(dimethylallyl)adenosine (i(6)A), leading to the formation of 2-methylthio-N6-(dimethylallyl)adenosine (ms(2)i(6)A) at position 37 in tRNAs that read codons beginning with uridine. This is tRNA-2-methylthio-N(6)-dimethylallyladenosine synthase from Hydrogenobaculum sp. (strain Y04AAS1).